The sequence spans 1028 residues: Formin-like protein 3 (1028 aa).

A lipid anchor (N-myristoyl glycine) is attached at glycine 2. Residues 26-472 (MPMPEPCELE…EAFQRRCHLE (447 aa)) form the GBD/FH3 domain. A Phosphothreonine modification is found at threonine 95. Serine 174 carries the phosphoserine modification. Residues 493–541 (ELSEGMPPSDLDLLAPAPPPEEVLPLPPPPAPPLPPPPPPLPDKCPPAP) form a disordered region. The span at 508-541 (PAPPPEEVLPLPPPPAPPLPPPPPPLPDKCPPAP) shows a compositional bias: pro residues. The FH2 domain maps to 561–951 (IKKPIKTKFR…MREKQLAQEA (391 aa)). A DAD domain is found at 986–1018 (YEGKDGTIEDIITVLKSVPFTARTAKRGSRFFC). Serine 1014 bears the Phosphoserine mark.

The protein belongs to the formin homology family. As to quaternary structure, interacts with SRGAP2 (via SH3 domain). In terms of tissue distribution, expressed in endothelial cells.

The protein localises to the cytoplasm. It is found in the cell membrane. In terms of biological role, plays a role in the regulation of cell morphology and cytoskeletal organization. Required in the control of cell shape and migration. Required for developmental angiogenesis. In this process, required for microtubule reorganization and for efficient endothelial cell elongation. In quiescent endothelial cells, triggers rearrangement of the actin cytoskeleton, but does not alter microtubule alignement. The chain is Formin-like protein 3 (FMNL3) from Homo sapiens (Human).